The sequence spans 247 residues: Small ribosomal subunit protein uS3 (247 aa).

A KH type-2 domain is found at 38-106 (IRDFLSEGLD…QVQLNILEVK (69 aa)). Residues 214–226 (SLMNARDERPSRG) are compositionally biased toward basic and acidic residues. A disordered region spans residues 214–247 (SLMNARDERPSRGRRERPRRGGARRQRAEQKQEG). Basic residues predominate over residues 227–238 (RRERPRRGGARR).

Belongs to the universal ribosomal protein uS3 family. As to quaternary structure, part of the 30S ribosomal subunit. Forms a tight complex with proteins S10 and S14.

Functionally, binds the lower part of the 30S subunit head. Binds mRNA in the 70S ribosome, positioning it for translation. The polypeptide is Small ribosomal subunit protein uS3 (Corynebacterium jeikeium (strain K411)).